The sequence spans 331 residues: Ketol-acid reductoisomerase (NADP(+)) (331 aa).

Residues 2 to 182 form the KARI N-terminal Rossmann domain; the sequence is AKMYYDQDAD…GGTKAGAIET (181 aa). NADP(+) contacts are provided by residues 25–28, serine 51, serine 53, and 83–86; these read FGSQ and DEKQ. Histidine 108 is a catalytic residue. Glycine 134 serves as a coordination point for NADP(+). One can recognise a KARI C-terminal knotted domain in the interval 183-328; that stretch reads TFKEETETDL…KSLREMMPWL (146 aa). Residues aspartate 191, glutamate 195, glutamate 227, and glutamate 231 each contribute to the Mg(2+) site. Serine 252 contacts substrate.

This sequence belongs to the ketol-acid reductoisomerase family. Mg(2+) serves as cofactor.

It catalyses the reaction (2R)-2,3-dihydroxy-3-methylbutanoate + NADP(+) = (2S)-2-acetolactate + NADPH + H(+). The catalysed reaction is (2R,3R)-2,3-dihydroxy-3-methylpentanoate + NADP(+) = (S)-2-ethyl-2-hydroxy-3-oxobutanoate + NADPH + H(+). It participates in amino-acid biosynthesis; L-isoleucine biosynthesis; L-isoleucine from 2-oxobutanoate: step 2/4. Its pathway is amino-acid biosynthesis; L-valine biosynthesis; L-valine from pyruvate: step 2/4. In terms of biological role, involved in the biosynthesis of branched-chain amino acids (BCAA). Catalyzes an alkyl-migration followed by a ketol-acid reduction of (S)-2-acetolactate (S2AL) to yield (R)-2,3-dihydroxy-isovalerate. In the isomerase reaction, S2AL is rearranged via a Mg-dependent methyl migration to produce 3-hydroxy-3-methyl-2-ketobutyrate (HMKB). In the reductase reaction, this 2-ketoacid undergoes a metal-dependent reduction by NADPH to yield (R)-2,3-dihydroxy-isovalerate. The protein is Ketol-acid reductoisomerase (NADP(+)) of Caldanaerobacter subterraneus subsp. tengcongensis (strain DSM 15242 / JCM 11007 / NBRC 100824 / MB4) (Thermoanaerobacter tengcongensis).